Reading from the N-terminus, the 522-residue chain is Anthranilate synthase component 1 (522 aa).

Residues serine 40 and proline 292–methionine 294 contribute to the L-tryptophan site. Position 329–330 (glycine 329–threonine 330) interacts with chorismate. Position 362 (glutamate 362) interacts with Mg(2+). Chorismate is bound by residues tyrosine 450, arginine 470, glycine 484–glycine 486, and glycine 486. Glutamate 499 contacts Mg(2+).

The protein belongs to the anthranilate synthase component I family. In terms of assembly, heterotetramer consisting of two non-identical subunits: a beta subunit (TrpG) and a large alpha subunit (TrpE). Requires Mg(2+) as cofactor.

It catalyses the reaction chorismate + L-glutamine = anthranilate + pyruvate + L-glutamate + H(+). It functions in the pathway amino-acid biosynthesis; L-tryptophan biosynthesis; L-tryptophan from chorismate: step 1/5. Feedback inhibited by tryptophan. Its function is as follows. Part of a heterotetrameric complex that catalyzes the two-step biosynthesis of anthranilate, an intermediate in the biosynthesis of L-tryptophan. In the first step, the glutamine-binding beta subunit (TrpG) of anthranilate synthase (AS) provides the glutamine amidotransferase activity which generates ammonia as a substrate that, along with chorismate, is used in the second step, catalyzed by the large alpha subunit of AS (TrpE) to produce anthranilate. In the absence of TrpG, TrpE can synthesize anthranilate directly from chorismate and high concentrations of ammonia. The protein is Anthranilate synthase component 1 (trpE) of Buchnera aphidicola subsp. Baizongia pistaciae (strain Bp).